Reading from the N-terminus, the 360-residue chain is Phospho-N-acetylmuramoyl-pentapeptide-transferase (360 aa).

The Periplasmic segment spans residues 1–25 (MLVWLAEHLVKYYSGFNVFSYLTFR). The chain crosses the membrane as a helical span at residues 26–46 (AIVSLLTALFISLWMGPRMIA). Residues 47 to 71 (RLQKLSFGQVVRNDGPESHFSKRGT) are Cytoplasmic-facing. Residues 72 to 92 (PTMGGIMILTAIVISVLLWAY) form a helical membrane-spanning segment. A topological domain (periplasmic) is located at residue proline 93. The helical transmembrane segment at 94 to 114 (SNPYVWCVLVVLIGYGIIGFV) threads the bilayer. Residues 115 to 131 (DDYRKVVRKDTKGLIAR) are Cytoplasmic-facing. A helical membrane pass occupies residues 132–152 (WKYFWMSVIALGVAFALYLVG). Residues 153 to 167 (KDTPATQLVVPFFKD) lie on the Periplasmic side of the membrane. Residues 168–188 (VMPQLGLFYILLSYFVIVGTG) traverse the membrane as a helical segment. The Cytoplasmic portion of the chain corresponds to 189-198 (NAVNLTDGLD). The helical transmembrane segment at 199–219 (GLAIMPTVFVAAGFALVAWAT) threads the bilayer. The Periplasmic segment spans residues 220–235 (GNMNFANYLHIPYLRH). The chain crosses the membrane as a helical span at residues 236-256 (AGELVIVCTAIVGAGLGFLWF). The Cytoplasmic portion of the chain corresponds to 257 to 262 (NTYPAQ). A helical transmembrane segment spans residues 263-283 (VFMGDVGSLALGGALGIIAVL). Residues 284–287 (LRQE) are Periplasmic-facing. Residues 288–308 (FLLVIMGGVFVVETLSVILQV) traverse the membrane as a helical segment. Topologically, residues 309 to 337 (GSFKLRGQRIFRMAPIHHHYELKGWPEPR) are cytoplasmic. The helical transmembrane segment at 338–358 (VIVRFWIISLMLVLIGLATLK) threads the bilayer. Over 359–360 (VR) the chain is Periplasmic.

It belongs to the glycosyltransferase 4 family. MraY subfamily. It depends on Mg(2+) as a cofactor.

The protein localises to the cell inner membrane. The catalysed reaction is UDP-N-acetyl-alpha-D-muramoyl-L-alanyl-gamma-D-glutamyl-meso-2,6-diaminopimeloyl-D-alanyl-D-alanine + di-trans,octa-cis-undecaprenyl phosphate = di-trans,octa-cis-undecaprenyl diphospho-N-acetyl-alpha-D-muramoyl-L-alanyl-D-glutamyl-meso-2,6-diaminopimeloyl-D-alanyl-D-alanine + UMP. It functions in the pathway cell wall biogenesis; peptidoglycan biosynthesis. Functionally, catalyzes the initial step of the lipid cycle reactions in the biosynthesis of the cell wall peptidoglycan: transfers peptidoglycan precursor phospho-MurNAc-pentapeptide from UDP-MurNAc-pentapeptide onto the lipid carrier undecaprenyl phosphate, yielding undecaprenyl-pyrophosphoryl-MurNAc-pentapeptide, known as lipid I. The sequence is that of Phospho-N-acetylmuramoyl-pentapeptide-transferase from Salmonella agona (strain SL483).